The following is a 470-amino-acid chain: Siroheme synthase (470 aa).

Residues 1–203 (MEFFPIFLKL…GDEAAARAEM (203 aa)) form a precorrin-2 dehydrogenase /sirohydrochlorin ferrochelatase region. NAD(+) contacts are provided by residues 22–23 (EV) and 43–44 (PE). Ser-128 is modified (phosphoserine). Residues 216–470 (GAVYLVGAGP…ENSAVTIQED (255 aa)) form a uroporphyrinogen-III C-methyltransferase region. Pro-225 is a binding site for S-adenosyl-L-methionine. The active-site Proton acceptor is Asp-248. Lys-270 serves as the catalytic Proton donor. S-adenosyl-L-methionine is bound by residues 301 to 303 (GGD), Met-383, and Ala-412.

In the N-terminal section; belongs to the precorrin-2 dehydrogenase / sirohydrochlorin ferrochelatase family. It in the C-terminal section; belongs to the precorrin methyltransferase family.

It catalyses the reaction uroporphyrinogen III + 2 S-adenosyl-L-methionine = precorrin-2 + 2 S-adenosyl-L-homocysteine + H(+). The enzyme catalyses precorrin-2 + NAD(+) = sirohydrochlorin + NADH + 2 H(+). The catalysed reaction is siroheme + 2 H(+) = sirohydrochlorin + Fe(2+). Its pathway is cofactor biosynthesis; adenosylcobalamin biosynthesis; precorrin-2 from uroporphyrinogen III: step 1/1. It participates in cofactor biosynthesis; adenosylcobalamin biosynthesis; sirohydrochlorin from precorrin-2: step 1/1. It functions in the pathway porphyrin-containing compound metabolism; siroheme biosynthesis; precorrin-2 from uroporphyrinogen III: step 1/1. The protein operates within porphyrin-containing compound metabolism; siroheme biosynthesis; siroheme from sirohydrochlorin: step 1/1. Its pathway is porphyrin-containing compound metabolism; siroheme biosynthesis; sirohydrochlorin from precorrin-2: step 1/1. In terms of biological role, multifunctional enzyme that catalyzes the SAM-dependent methylations of uroporphyrinogen III at position C-2 and C-7 to form precorrin-2 via precorrin-1. Then it catalyzes the NAD-dependent ring dehydrogenation of precorrin-2 to yield sirohydrochlorin. Finally, it catalyzes the ferrochelation of sirohydrochlorin to yield siroheme. In Chromobacterium violaceum (strain ATCC 12472 / DSM 30191 / JCM 1249 / CCUG 213 / NBRC 12614 / NCIMB 9131 / NCTC 9757 / MK), this protein is Siroheme synthase.